The sequence spans 655 residues: Fructose-1,6-bisphosphatase class 3 (655 aa).

Belongs to the FBPase class 3 family. Mn(2+) is required as a cofactor.

It carries out the reaction beta-D-fructose 1,6-bisphosphate + H2O = beta-D-fructose 6-phosphate + phosphate. The protein operates within carbohydrate biosynthesis; gluconeogenesis. This Porphyromonas gingivalis (strain ATCC 33277 / DSM 20709 / CIP 103683 / JCM 12257 / NCTC 11834 / 2561) protein is Fructose-1,6-bisphosphatase class 3.